The following is a 117-amino-acid chain: Large ribosomal subunit protein bL20 (117 aa).

The protein belongs to the bacterial ribosomal protein bL20 family.

Binds directly to 23S ribosomal RNA and is necessary for the in vitro assembly process of the 50S ribosomal subunit. It is not involved in the protein synthesizing functions of that subunit. The polypeptide is Large ribosomal subunit protein bL20 (Mesomycoplasma hyopneumoniae (strain J / ATCC 25934 / NCTC 10110) (Mycoplasma hyopneumoniae)).